A 92-amino-acid polypeptide reads, in one-letter code: MASKSGKTGSSGRFGARYGRVSRRRVAEIESEMNEDHACPNCGEDRVDRQGTGIWQCSYCDYKFTGGSYKPETPGGKTVRRSIRAALSEDEE.

Zn(2+)-binding residues include cysteine 39, cysteine 42, cysteine 57, and cysteine 60. The segment at 39–60 (CPNCGEDRVDRQGTGIWQCSYC) adopts a C4-type zinc-finger fold.

Belongs to the eukaryotic ribosomal protein eL43 family. Putative zinc-binding subfamily. In terms of assembly, part of the 50S ribosomal subunit. Contacts protein L2. Zn(2+) is required as a cofactor.

In terms of biological role, binds to the 23S rRNA. The sequence is that of Large ribosomal subunit protein eL43 from Haloarcula marismortui (strain ATCC 43049 / DSM 3752 / JCM 8966 / VKM B-1809) (Halobacterium marismortui).